Reading from the N-terminus, the 917-residue chain is Alanine--tRNA ligase (917 aa).

Zn(2+) is bound by residues His-592, His-596, Cys-694, and His-698.

It belongs to the class-II aminoacyl-tRNA synthetase family. Requires Zn(2+) as cofactor.

It localises to the cytoplasm. The enzyme catalyses tRNA(Ala) + L-alanine + ATP = L-alanyl-tRNA(Ala) + AMP + diphosphate. In terms of biological role, catalyzes the attachment of alanine to tRNA(Ala) in a two-step reaction: alanine is first activated by ATP to form Ala-AMP and then transferred to the acceptor end of tRNA(Ala). Also edits incorrectly charged Ser-tRNA(Ala) and Gly-tRNA(Ala) via its editing domain. The chain is Alanine--tRNA ligase from Sorangium cellulosum (strain So ce56) (Polyangium cellulosum (strain So ce56)).